We begin with the raw amino-acid sequence, 148 residues long: Nucleoside diphosphate kinase (148 aa).

Residues lysine 9, phenylalanine 57, arginine 85, threonine 91, arginine 102, and asparagine 112 each contribute to the ATP site. Threonine 91 is subject to Phosphothreonine. Histidine 115 acts as the Pros-phosphohistidine intermediate in catalysis. Serine 122 is subject to Phosphoserine.

This sequence belongs to the NDK family. Homotetramer. Requires Mg(2+) as cofactor.

The protein resides in the cytoplasm. The catalysed reaction is a 2'-deoxyribonucleoside 5'-diphosphate + ATP = a 2'-deoxyribonucleoside 5'-triphosphate + ADP. It catalyses the reaction a ribonucleoside 5'-diphosphate + ATP = a ribonucleoside 5'-triphosphate + ADP. Functionally, major role in the synthesis of nucleoside triphosphates other than ATP. The ATP gamma phosphate is transferred to the NDP beta phosphate via a ping-pong mechanism, using a phosphorylated active-site intermediate. In Bacillus cereus (strain ATCC 14579 / DSM 31 / CCUG 7414 / JCM 2152 / NBRC 15305 / NCIMB 9373 / NCTC 2599 / NRRL B-3711), this protein is Nucleoside diphosphate kinase.